Reading from the N-terminus, the 444-residue chain is Probable glycolate oxidase iron-sulfur subunit (444 aa).

4Fe-4S ferredoxin-type domains follow at residues 14 to 46 (FKERMDEGELLNCMRCGFCLPSCPTYIESGFQE) and 69 to 100 (EDVERSLSLCLGCRACEPVCPSGVKYGQLLEE). 8 residues coordinate [4Fe-4S] cluster: Cys26, Cys29, Cys32, Cys36, Cys78, Cys81, Cys84, and Cys88.

The glycolate oxidase likely consists of several subunits including GlcD and GlcF. It depends on [4Fe-4S] cluster as a cofactor.

Its subcellular location is the cell membrane. It catalyses the reaction glycolate + A = glyoxylate + AH2. The enzyme catalyses (R)-lactate + A = pyruvate + AH2. Functionally, component of a complex that catalyzes the oxidation of glycolate to glyoxylate. Is also able to oxidize D-lactate ((R)-lactate). Does not link directly to O(2), and 2,6-dichloroindophenol (DCIP) and phenazine methosulfate (PMS) can act as artificial electron acceptors in vitro, but the physiological molecule that functions as primary electron acceptor during glycolate oxidation is unknown. This Bacillus subtilis (strain 168) protein is Probable glycolate oxidase iron-sulfur subunit (glcF).